The sequence spans 62 residues: Protein sigN176 (62 aa).

This is Protein sigN176 from Dictyostelium discoideum (Social amoeba).